The chain runs to 1065 residues: Outer capsid protein VP3 (1065 aa).

It localises to the virion. It carries out the reaction a 5'-end diphospho-ribonucleoside in mRNA + GTP + H(+) = a 5'-end (5'-triphosphoguanosine)-ribonucleoside in mRNA + diphosphate. It catalyses the reaction a 5'-end (5'-triphosphoguanosine)-ribonucleoside in mRNA + S-adenosyl-L-methionine = a 5'-end (N(7)-methyl 5'-triphosphoguanosine)-ribonucleoside in mRNA + S-adenosyl-L-homocysteine. Functionally, outer capsid protein involved in mRNA capping. Catalyzes the last 3 enzymatic activities for formation of the 5' cap structure on the viral plus-strand transcripts, namely the RNA guanylyltransferase, RNA-7N- and RNA-2'O-methyltransferase activities. The chain is Outer capsid protein VP3 (S3) from Cryphonectria parasitica mycoreovirus 1 (strain 9B21) (CpMYRV-1).